The sequence spans 106 residues: Cell division protein FtsB (106 aa).

Topologically, residues 1–3 (MGK) are cytoplasmic. The helical transmembrane segment at 4-21 (LTLLLLVLLGWLQYSLWL) threads the bilayer. Residues 22 to 106 (GKNGIHDYVR…SRPSTPNNTQ (85 aa)) lie on the Periplasmic side of the membrane. A coiled-coil region spans residues 29 to 70 (YVRVKNDVAMQERNNSKLKARNDQLSAEIDDLTGGQEAIEER).

It belongs to the FtsB family. Part of a complex composed of FtsB, FtsL and FtsQ.

Its subcellular location is the cell inner membrane. Functionally, essential cell division protein. May link together the upstream cell division proteins, which are predominantly cytoplasmic, with the downstream cell division proteins, which are predominantly periplasmic. The polypeptide is Cell division protein FtsB (Photorhabdus laumondii subsp. laumondii (strain DSM 15139 / CIP 105565 / TT01) (Photorhabdus luminescens subsp. laumondii)).